A 213-amino-acid chain; its full sequence is Endoplasmic reticulum vesicle protein 25 (213 aa).

A signal peptide spans M1 to A20. The Lumenal portion of the chain corresponds to V21 to K181. The 90-residue stretch at P33–I122 folds into the GOLD domain. A helical membrane pass occupies residues V182–L202. The Cytoplasmic portion of the chain corresponds to R203–D213.

Belongs to the EMP24/GP25L family.

The protein localises to the endoplasmic reticulum membrane. It is found in the golgi apparatus membrane. In terms of biological role, constituent of COPII-coated endoplasmic reticulum-derived transport vesicles. Required for efficient transport of a subset of secretory proteins to the Golgi. Facilitates retrograde transport from the Golgi to the endoplasmic reticulum. In Cryptococcus neoformans var. neoformans serotype D (strain JEC21 / ATCC MYA-565) (Filobasidiella neoformans), this protein is Endoplasmic reticulum vesicle protein 25 (ERV25).